A 946-amino-acid polypeptide reads, in one-letter code: Translation initiation factor IF-2 (946 aa).

Disordered stretches follow at residues 58-250 and 301-324; these read AERK…AVVI and VSRDKRRGRQPGRPISEEQAKSLS. 2 stretches are compositionally biased toward low complexity: residues 102 to 165 and 174 to 185; these read EPPQ…QPAA and AQPSAPQPAAAQ. Over residues 186–211 the composition is skewed to pro residues; it reads PRPPQPPMPSRPPPAGYRPAPPPGAR. Residues 212 to 229 show a composition bias toward low complexity; it reads PPMSAAPGAPAQPGAAAQ. One can recognise a tr-type G domain in the interval 445-614; it reads IRPPVVTVMG…ALQSEVLELK (170 aa). The G1 stretch occupies residues 454–461; that stretch reads GHVDHGKT. Position 454–461 (454–461) interacts with GTP; it reads GHVDHGKT. The interval 479–483 is G2; it reads GITQH. The G3 stretch occupies residues 500–503; the sequence is DTPG. Residues 500–504 and 554–557 each bind GTP; these read DTPGH and NKVD. The G4 stretch occupies residues 554–557; it reads NKVD. The tract at residues 590–592 is G5; sequence SAR.

Belongs to the TRAFAC class translation factor GTPase superfamily. Classic translation factor GTPase family. IF-2 subfamily.

The protein localises to the cytoplasm. One of the essential components for the initiation of protein synthesis. Protects formylmethionyl-tRNA from spontaneous hydrolysis and promotes its binding to the 30S ribosomal subunits. Also involved in the hydrolysis of GTP during the formation of the 70S ribosomal complex. The sequence is that of Translation initiation factor IF-2 from Anaeromyxobacter sp. (strain K).